The primary structure comprises 332 residues: Probable endo-beta-1,4-glucanase B (332 aa).

Positions 1 to 18 (MKFQSTLLLAAAAGSALA) are cleaved as a signal peptide. N-linked (GlcNAc...) asparagine glycosylation is found at N38 and N100. The Proton donor role is filled by E160. Residue N212 is glycosylated (N-linked (GlcNAc...) asparagine). The active-site Nucleophile is E267. An N-linked (GlcNAc...) asparagine glycan is attached at N289.

It belongs to the glycosyl hydrolase 5 (cellulase A) family.

It is found in the secreted. The enzyme catalyses Endohydrolysis of (1-&gt;4)-beta-D-glucosidic linkages in cellulose, lichenin and cereal beta-D-glucans.. In terms of biological role, has endoglucanase activity on substrates containing beta-1,4 glycosidic bonds, like in carboxymethylcellulose (CMC), hydroxyethylcellulose (HEC) and beta-glucan. Involved in the degradation of complex natural cellulosic substrates. In Aspergillus kawachii (strain NBRC 4308) (White koji mold), this protein is Probable endo-beta-1,4-glucanase B (eglB).